The chain runs to 475 residues: Aspartyl/glutamyl-tRNA(Asn/Gln) amidotransferase subunit B (475 aa).

Belongs to the GatB/GatE family. GatB subfamily. As to quaternary structure, heterotrimer of A, B and C subunits.

It catalyses the reaction L-glutamyl-tRNA(Gln) + L-glutamine + ATP + H2O = L-glutaminyl-tRNA(Gln) + L-glutamate + ADP + phosphate + H(+). It carries out the reaction L-aspartyl-tRNA(Asn) + L-glutamine + ATP + H2O = L-asparaginyl-tRNA(Asn) + L-glutamate + ADP + phosphate + 2 H(+). In terms of biological role, allows the formation of correctly charged Asn-tRNA(Asn) or Gln-tRNA(Gln) through the transamidation of misacylated Asp-tRNA(Asn) or Glu-tRNA(Gln) in organisms which lack either or both of asparaginyl-tRNA or glutaminyl-tRNA synthetases. The reaction takes place in the presence of glutamine and ATP through an activated phospho-Asp-tRNA(Asn) or phospho-Glu-tRNA(Gln). The chain is Aspartyl/glutamyl-tRNA(Asn/Gln) amidotransferase subunit B from Bacillus cereus (strain ZK / E33L).